A 351-amino-acid polypeptide reads, in one-letter code: Rhodopsin (351 aa).

The Extracellular segment spans residues methionine 1–alanine 36. Asparagine 2 and asparagine 15 each carry an N-linked (GlcNAc...) asparagine glycan. A helical transmembrane segment spans residues tyrosine 37–valine 61. The Cytoplasmic segment spans residues threonine 62–asparagine 73. A helical transmembrane segment spans residues tyrosine 74–tyrosine 96. Topologically, residues threonine 97–cysteine 110 are extracellular. An intrachain disulfide couples cysteine 110 to cysteine 187. A helical transmembrane segment spans residues asparagine 111–isoleucine 133. The short motif at glutamate 134–tryptophan 136 is the 'Ionic lock' involved in activated form stabilization element. Residues glutamate 134–histidine 152 lie on the Cytoplasmic side of the membrane. The chain crosses the membrane as a helical span at residues alanine 153 to valine 173. The Extracellular portion of the chain corresponds to glycine 174–serine 202. An N-linked (GlcNAc...) asparagine glycan is attached at asparagine 200. The chain crosses the membrane as a helical span at residues phenylalanine 203–glycine 224. At arginine 225–arginine 252 the chain is on the cytoplasmic side. Residues methionine 253–phenylalanine 274 form a helical membrane-spanning segment. At isoleucine 275–leucine 286 the chain is on the extracellular side. The chain crosses the membrane as a helical span at residues phenylalanine 287–cysteine 308. Residue lysine 296 is modified to N6-(retinylidene)lysine. The Cytoplasmic portion of the chain corresponds to methionine 309 to alanine 351. A lipid anchor (S-palmitoyl cysteine) is attached at cysteine 323. A disordered region spans residues glycine 330–alanine 351. Low complexity predominate over residues alanine 335–alanine 351.

It belongs to the G-protein coupled receptor 1 family. Opsin subfamily. In terms of processing, phosphorylated on some or all of the serine and threonine residues present in the C-terminal region. Contains one covalently linked retinal chromophore.

It localises to the membrane. The protein localises to the cell projection. It is found in the cilium. The protein resides in the photoreceptor outer segment. Photoreceptor required for image-forming vision at low light intensity. While most salt water fish species use retinal as chromophore, most freshwater fish use 3-dehydroretinal, or a mixture of retinal and 3-dehydroretinal. Light-induced isomerization of 11-cis to all-trans retinal triggers a conformational change that activates signaling via G-proteins. Subsequent receptor phosphorylation mediates displacement of the bound G-protein alpha subunit by arrestin and terminates signaling. This is Rhodopsin (rho) from Sargocentron diadema (Crown squirrelfish).